The primary structure comprises 116 residues: MGTSELLKHIYDINLSYLLLAQRLINQEKASAMFRLGIDEKMADALSELTLPEMVKLAETNQLVCQFRFTDSTVINRLTQESRVDDLQQIHTGILLSSRLLRSASKDAAPTKKRAV.

This sequence belongs to the FlhD family. Homodimer; disulfide-linked. Forms a heterohexamer composed of two FlhC and four FlhD subunits. Each FlhC binds a FlhD dimer, forming a heterotrimer, and a hexamer assembles by dimerization of two heterotrimers.

The protein resides in the cytoplasm. In terms of biological role, functions in complex with FlhC as a master transcriptional regulator that regulates transcription of several flagellar and non-flagellar operons by binding to their promoter region. Activates expression of class 2 flagellar genes, including fliA, which is a flagellum-specific sigma factor that turns on the class 3 genes. Also regulates genes whose products function in a variety of physiological pathways. The sequence is that of Flagellar transcriptional regulator FlhD from Pantoea ananatis (strain LMG 20103).